The primary structure comprises 644 residues: Exoribonuclease 2 (644 aa).

The region spanning 189-516 is the RNB domain; it reads REDLTALDFV…NHRLLKAVIK (328 aa). Positions 561–643 constitute an S1 motif domain; it reads DTRFAAEIVD…ETRSIIARPV (83 aa).

This sequence belongs to the RNR ribonuclease family. RNase II subfamily.

It localises to the cytoplasm. The enzyme catalyses Exonucleolytic cleavage in the 3'- to 5'-direction to yield nucleoside 5'-phosphates.. Its function is as follows. Involved in mRNA degradation. Hydrolyzes single-stranded polyribonucleotides processively in the 3' to 5' direction. In Shigella boydii serotype 18 (strain CDC 3083-94 / BS512), this protein is Exoribonuclease 2.